The chain runs to 418 residues: Perilipin-1 homolog (418 aa).

The tract at residues 211-275 (LTIGQRVKNL…EKKTWVIEKS (65 aa)) is required for lipid droplet localization.

The protein belongs to the perilipin family. In terms of tissue distribution, expressed in intestinal and epidermal cells. Expressed in the muscle and hypodermis.

Its subcellular location is the lipid droplet. Its function is as follows. Lipid droplet-associated protein which plays a role in lipid droplet clustering. The chain is Perilipin-1 homolog from Caenorhabditis elegans.